The chain runs to 93 residues: UPF0473 protein YrzB (93 aa).

This sequence belongs to the UPF0473 family.

This Bacillus subtilis (strain 168) protein is UPF0473 protein YrzB (yrzB).